The following is a 183-amino-acid chain: Secreted RxLR effector protein 41 (183 aa).

The first 18 residues, 1 to 18, serve as a signal peptide directing secretion; it reads MLGFVTGVLAISAHVIVS. Residues 41-65 carry the RxLR-dEER motif; sequence RRLRSYETDTASARAEEGTSDIEER. An N-linked (GlcNAc...) asparagine glycan is attached at asparagine 88.

It belongs to the RxLR effector family.

The protein localises to the secreted. Its subcellular location is the host nucleus. It localises to the host cytoplasm. Secreted effector that dos not suppress the host cell death induced by cell death-inducing proteins. This Plasmopara viticola (Downy mildew of grapevine) protein is Secreted RxLR effector protein 41.